The following is a 283-amino-acid chain: Octanoyl-[GcvH]:protein N-octanoyltransferase (283 aa).

In terms of domain architecture, BPL/LPL catalytic spans 42–248 (GQSDAVVRTW…TLQSFGGELY (207 aa)). Cys-147 acts as the Acyl-thioester intermediate in catalysis.

Belongs to the octanoyltransferase LipL family.

It catalyses the reaction N(6)-octanoyl-L-lysyl-[glycine-cleavage complex H protein] + L-lysyl-[lipoyl-carrier protein] = N(6)-octanoyl-L-lysyl-[lipoyl-carrier protein] + L-lysyl-[glycine-cleavage complex H protein]. Its pathway is protein modification; protein lipoylation via endogenous pathway; protein N(6)-(lipoyl)lysine from octanoyl-[acyl-carrier-protein]. Catalyzes the amidotransfer (transamidation) of the octanoyl moiety from octanoyl-GcvH to the lipoyl domain of the E2 subunit of lipoate-dependent enzymes. The polypeptide is Octanoyl-[GcvH]:protein N-octanoyltransferase (Geobacillus kaustophilus (strain HTA426)).